A 302-amino-acid chain; its full sequence is Putative S-adenosyl-L-methionine-dependent methyltransferase MRA_0290 (302 aa).

Residues aspartate 126 and 155-156 (DL) each bind S-adenosyl-L-methionine.

The protein belongs to the UPF0677 family.

In terms of biological role, exhibits S-adenosyl-L-methionine-dependent methyltransferase activity. This chain is Putative S-adenosyl-L-methionine-dependent methyltransferase MRA_0290, found in Mycobacterium tuberculosis (strain ATCC 25177 / H37Ra).